The chain runs to 178 residues: Oligoribonuclease (178 aa).

The region spanning 7 to 168 (LIWIDLEMTG…DDIRESIAEL (162 aa)) is the Exonuclease domain. Y128 is a catalytic residue.

It belongs to the oligoribonuclease family.

The protein localises to the cytoplasm. Its function is as follows. 3'-to-5' exoribonuclease specific for small oligoribonucleotides. The sequence is that of Oligoribonuclease from Francisella tularensis subsp. holarctica (strain OSU18).